The chain runs to 257 residues: 5'-nucleotidase SurE (257 aa).

A divalent metal cation is bound by residues Asp8, Asp9, Ser40, and Asn97.

It belongs to the SurE nucleotidase family. Requires a divalent metal cation as cofactor.

Its subcellular location is the cytoplasm. The catalysed reaction is a ribonucleoside 5'-phosphate + H2O = a ribonucleoside + phosphate. Its function is as follows. Nucleotidase that shows phosphatase activity on nucleoside 5'-monophosphates. This Desulforudis audaxviator (strain MP104C) protein is 5'-nucleotidase SurE.